The following is a 280-amino-acid chain: 4-diphosphocytidyl-2-C-methyl-D-erythritol kinase (280 aa).

Residue Lys-8 is part of the active site. An ATP-binding site is contributed by 91 to 101 (PVSAGLAGGST). Asp-133 is a catalytic residue.

Belongs to the GHMP kinase family. IspE subfamily.

It carries out the reaction 4-CDP-2-C-methyl-D-erythritol + ATP = 4-CDP-2-C-methyl-D-erythritol 2-phosphate + ADP + H(+). It participates in isoprenoid biosynthesis; isopentenyl diphosphate biosynthesis via DXP pathway; isopentenyl diphosphate from 1-deoxy-D-xylulose 5-phosphate: step 3/6. Its function is as follows. Catalyzes the phosphorylation of the position 2 hydroxy group of 4-diphosphocytidyl-2C-methyl-D-erythritol. In Clostridium botulinum (strain Eklund 17B / Type B), this protein is 4-diphosphocytidyl-2-C-methyl-D-erythritol kinase.